We begin with the raw amino-acid sequence, 379 residues long: DNA (cytosine-5)-methyltransferase (379 aa).

Residues 4 to 366 form the SAM-dependent MTase C5-type domain; it reads LRVLEFYSGI…KVLVSPNEEE (363 aa). Cysteine 78 is an active-site residue. Over residues 178–192 the composition is skewed to basic and acidic residues; that stretch reads KKEQDKHNEKVDENK. The segment at 178 to 205 is disordered; that stretch reads KKEQDKHNEKVDENKLNNNSNNNNEQNK. Low complexity predominate over residues 193 to 203; that stretch reads LNNNSNNNNEQ.

It belongs to the class I-like SAM-binding methyltransferase superfamily. C5-methyltransferase family.

The protein localises to the nucleus. It catalyses the reaction a 2'-deoxycytidine in DNA + S-adenosyl-L-methionine = a 5-methyl-2'-deoxycytidine in DNA + S-adenosyl-L-homocysteine + H(+). Involved in epigenetic gene silencing. Methylates specific cytosine residues in the retrotransposons DIRS-1 and Skipper. The sequence is that of DNA (cytosine-5)-methyltransferase (dnmA) from Dictyostelium discoideum (Social amoeba).